The primary structure comprises 452 residues: Down-regulator of invasive growth 1 (452 aa).

2 disordered regions span residues Met-1–Ala-145 and Arg-262–Arg-311. Composition is skewed to polar residues over residues Glu-12 to Asp-22 and Lys-35 to Gln-53. Ser-45 carries the post-translational modification Phosphoserine. The segment covering Pro-61–Glu-77 has biased composition (acidic residues). Residues Ala-81–Arg-100 are compositionally biased toward basic residues. 4 stretches are compositionally biased toward polar residues: residues Leu-107–Gly-116, Leu-124–Ala-145, Ser-269–Gly-281, and Arg-291–Arg-307. A phosphoserine mark is found at Ser-126, Ser-142, Ser-272, and Ser-275. Residues Ile-212–Lys-452 form an interaction with FUS3 and KSS1 region. A Phosphoserine modification is found at Ser-330. A compositionally biased stretch (low complexity) spans Ala-331–Thr-348. Residues Ala-331–Ser-395 form a disordered region. The span at Asn-349–Asn-361 shows a compositional bias: basic and acidic residues. A compositionally biased stretch (acidic residues) spans Lys-362–Ile-372. Positions Pro-378–Ser-395 are enriched in low complexity. Position 379 is a phosphothreonine (Thr-379). Phosphoserine is present on residues Ser-395 and Ser-428.

Forms a complex with DIG2, STE12 and either FUS3 or KSS1. The interaction of FUS3 with STE12 depends on the presence of both DIG1 and DIG2. STE12 is lost from FUS3/DIG1/DIG2 complex after pheromone treatment. DIG1 and DIG2 have also been reported to interact with CLN1 and CLN2. Phosphorylated by FUS3 and KSS1, in a pheromone-stimulated manner. Phosphorylation reduces the affinity for STE12.

The protein localises to the nucleus. Its function is as follows. DIG1 and DIG2 are negative regulators of the filamentation and pheromone induced mating program. DIG1 and DIG2 inhibit the transcriptional activity of STE12 by direct protein-protein interaction. DIG1 colocalizes to promoters with STE12 and redistributes with it during induction of filamentation (by butanol) or mating (by pheromone) to program specific genes, but binding of DIG1 to STE12 is reduced by pheromone treatment. The protein is Down-regulator of invasive growth 1 (DIG1) of Saccharomyces cerevisiae (strain ATCC 204508 / S288c) (Baker's yeast).